The following is a 360-amino-acid chain: Heat-inducible transcription repressor HrcA (360 aa).

It belongs to the HrcA family.

Negative regulator of class I heat shock genes (grpE-dnaK-dnaJ and groELS operons). Prevents heat-shock induction of these operons. This is Heat-inducible transcription repressor HrcA from Streptococcus thermophilus (strain CNRZ 1066).